We begin with the raw amino-acid sequence, 330 residues long: Thioredoxin domain-containing protein 6 (330 aa).

One can recognise a Thioredoxin domain in the interval 11-115 (QVNISTQELW…QKTILDQLEA (105 aa)). The interval 157–303 (ERTCTLAIIK…LFPSLKFSDK (147 aa)) is NDK. Positions 300 to 330 (FSDKDTEAPQGGEAEATAGPTEALCFPEDVD) are disordered. Residues 307-322 (APQGGEAEATAGPTEA) show a composition bias toward low complexity.

Belongs to the NDK family. As to quaternary structure, monomer and homodimer. Detected at very low levels in testis, lung and brain.

The protein localises to the cytoplasm. Its subcellular location is the cytoskeleton. The protein resides in the cilium axoneme. It localises to the dynein axonemal particle. May be a regulator of microtubule physiology. The polypeptide is Thioredoxin domain-containing protein 6 (Homo sapiens (Human)).